A 160-amino-acid polypeptide reads, in one-letter code: Myosin catalytic light chain LC-1, mantle muscle (160 aa).

Xaa-1 carries the post-translational modification Blocked amino end (Xaa). 3 consecutive EF-hand domains span residues 7–44, 83–118, and 119–153; these read DEIEEVREVFDLFDFWDGRDGDVDAAKVGDLLRCLGMN, TAADEFMEAFKTFDREGQGLISSAEIRNVLKMLGER, and ITEDQCNDIFTFCDIREDIDGNIKYEDLMKKVMAG.

In molluscan muscle, calcium regulation is associated with myosin rather than with actin. Muscle myosin contains two types of light chains: the catalytic light chain, essential for ATPase activity, and the regulatory light chain, a calcium-binding protein responsible for Ca(2+) dependent binding and Ca(2+) dependent Mg-ATPase activity. This Todarodes pacificus (Japanese flying squid) protein is Myosin catalytic light chain LC-1, mantle muscle.